The sequence spans 447 residues: uncharacterized protein (447 aa).

The tract at residues 392–435 is disordered; that stretch reads RFTKPSSSVAKSTSPSLRNSGSDESDLNQSDSDKEDERVVPVPK. The span at 395 to 407 shows a compositional bias: low complexity; sequence KPSSSVAKSTSPS. Over residues 408–421 the composition is skewed to polar residues; that stretch reads LRNSGSDESDLNQS.

This is an uncharacterized protein from Invertebrate iridescent virus 3 (IIV-3).